A 291-amino-acid chain; its full sequence is uncharacterized protein (291 aa).

An HTH tetR-type domain is found at 2 to 62 (KEKEKLIIET…SMLNYYYDKT (61 aa)). The H-T-H motif DNA-binding region spans 25–44 (SVQEIAKECKISKGAFYIYF).

This is an uncharacterized protein from Bacillus subtilis (strain 168).